The primary structure comprises 95 residues: Large ribosomal subunit protein eL31 (95 aa).

It belongs to the eukaryotic ribosomal protein eL31 family.

The chain is Large ribosomal subunit protein eL31 (rpl31e) from Pyrococcus horikoshii (strain ATCC 700860 / DSM 12428 / JCM 9974 / NBRC 100139 / OT-3).